A 210-amino-acid polypeptide reads, in one-letter code: Ribonuclease HII (210 aa).

An RNase H type-2 domain is found at 18–210; sequence GLIAGVDEVG…FKPVKALLGL (193 aa). D24, E25, and D116 together coordinate a divalent metal cation.

Belongs to the RNase HII family. Mn(2+) is required as a cofactor. Mg(2+) serves as cofactor.

It is found in the cytoplasm. It carries out the reaction Endonucleolytic cleavage to 5'-phosphomonoester.. Its function is as follows. Endonuclease that specifically degrades the RNA of RNA-DNA hybrids. This chain is Ribonuclease HII, found in Shewanella baltica (strain OS155 / ATCC BAA-1091).